The sequence spans 280 residues: Sulfur carrier protein FdhD (280 aa).

Cysteine 121 functions as the Cysteine persulfide intermediate in the catalytic mechanism. 258 to 263 lines the Mo-bis(molybdopterin guanine dinucleotide) pocket; the sequence is FSRPGR.

The protein belongs to the FdhD family.

It localises to the cytoplasm. Functionally, required for formate dehydrogenase (FDH) activity. Acts as a sulfur carrier protein that transfers sulfur from IscS to the molybdenum cofactor prior to its insertion into FDH. This chain is Sulfur carrier protein FdhD, found in Cronobacter sakazakii (strain ATCC BAA-894) (Enterobacter sakazakii).